Reading from the N-terminus, the 188-residue chain is dCTP deaminase (188 aa).

109 to 114 is a binding site for dCTP; the sequence is KSTYAR. The active-site Proton donor/acceptor is glutamate 135. Residues glutamine 154, tyrosine 168, and glutamine 178 each contribute to the dCTP site.

It belongs to the dCTP deaminase family. Homotrimer.

The catalysed reaction is dCTP + H2O + H(+) = dUTP + NH4(+). It participates in pyrimidine metabolism; dUMP biosynthesis; dUMP from dCTP (dUTP route): step 1/2. Catalyzes the deamination of dCTP to dUTP. The chain is dCTP deaminase from Helicobacter pylori (strain G27).